The chain runs to 273 residues: Glutamate racemase (273 aa).

Residues 19-20 and 51-52 contribute to the substrate site; these read DS and YG. Cys-83 (proton donor/acceptor) is an active-site residue. 84-85 contributes to the substrate binding site; sequence NT. Cys-198 acts as the Proton donor/acceptor in catalysis. Substrate is bound at residue 199-200; sequence TH.

It belongs to the aspartate/glutamate racemases family.

It carries out the reaction L-glutamate = D-glutamate. The protein operates within cell wall biogenesis; peptidoglycan biosynthesis. Its function is as follows. Provides the (R)-glutamate required for cell wall biosynthesis. This Agrobacterium fabrum (strain C58 / ATCC 33970) (Agrobacterium tumefaciens (strain C58)) protein is Glutamate racemase.